The chain runs to 840 residues: Radial spoke head 10 homolog B (840 aa).

Basic and acidic residues-rich tracts occupy residues 1 to 16 and 51 to 63; these read MVKEKKKADKKGDKSA and QPKDPGVKREVKS. The interval 1–74 is disordered; the sequence is MVKEKKKADK…SLPNEDTTQY (74 aa). MORN repeat units follow at residues 86-108, 109-131, 132-154, 155-177, 179-201, 204-226, 227-249, 251-273, 284-306, and 307-329; these read SYEGEKVRGLYEGEGFAIFQGGC, TYQGMFSEGLMHGQGTYIWADGL, KYEGDFVKNIPMNHGIFTWPDGS, TYEGEVVGGMRHGFGMFKCSTQP, SYIGHWCHGKRHGKGSIYYNQEG, WYEGDWIHNIRKGWGIRCYKSGN, IYEGQWENNVRHGEGRMRWLTTN, EYTGQWKHGVQNGLGTHTWFLKR, EYVGEFVNGYRHGHGKFYYASGA, and MYEGEWVSNKKHGMGRLTFKNGR. A coiled-coil region spans residues 758–801; sequence KEKVKENRLHNEAMALQRKMENEELEARLNSLREEEAKRQDYEV. Residues 810-840 form a disordered region; it reads VDAPSSSFTPSPPKEDTVVSSKSITSKKKKK.

In terms of assembly, interacts with RSPH6A. Does not appear to be part of the axonemal radial spoke complexes 1 or 2.

The protein resides in the cytoplasm. Its subcellular location is the cytoskeleton. It localises to the cilium axoneme. It is found in the cell projection. The protein localises to the cilium. The protein resides in the flagellum. May function as part of the axonemal radial spoke complex 3 (RS3). Radial spoke complexes are important for ciliary motility. The protein is Radial spoke head 10 homolog B (RSPH10B) of Bos taurus (Bovine).